The sequence spans 976 residues: DNA-directed RNA polymerase 1, mitochondrial (976 aa).

Residues 1–42 (MWRNILGRASLRKVKFLSDSSSSGTHYPVNRVRGILSSVNLS) constitute a mitochondrion transit peptide. Catalysis depends on residues aspartate 677, lysine 752, and aspartate 909.

It belongs to the phage and mitochondrial RNA polymerase family.

Its subcellular location is the mitochondrion. It carries out the reaction RNA(n) + a ribonucleoside 5'-triphosphate = RNA(n+1) + diphosphate. DNA-dependent RNA polymerase catalyzes the transcription of DNA into RNA using the four ribonucleoside triphosphates as substrates. This is DNA-directed RNA polymerase 1, mitochondrial (RPOT1) from Arabidopsis thaliana (Mouse-ear cress).